A 92-amino-acid polypeptide reads, in one-letter code: Small ribosomal subunit protein uS19 (92 aa).

Belongs to the universal ribosomal protein uS19 family.

Its function is as follows. Protein S19 forms a complex with S13 that binds strongly to the 16S ribosomal RNA. The chain is Small ribosomal subunit protein uS19 from Oceanobacillus iheyensis (strain DSM 14371 / CIP 107618 / JCM 11309 / KCTC 3954 / HTE831).